The chain runs to 409 residues: L-cysteine:1D-myo-inositol 2-amino-2-deoxy-alpha-D-glucopyranoside ligase (409 aa).

Position 43 (Cys-43) interacts with Zn(2+). Residues 43 to 46 (CGIT), Thr-58, and 81 to 83 (NVT) contribute to the L-cysteinyl-5'-AMP site. The 'HIGH' region signature appears at 45–55 (ITPYDATHMGH). The 'ERGGDP' region motif lies at 183-188 (ERGGDP). Trp-224 is an L-cysteinyl-5'-AMP binding site. Cys-228 is a binding site for Zn(2+). L-cysteinyl-5'-AMP is bound at residue 246 to 248 (GSD). Zn(2+) is bound at residue His-253. Val-280 contributes to the L-cysteinyl-5'-AMP binding site. The 'KMSKS' region motif lies at 286–290 (KMSKS).

This sequence belongs to the class-I aminoacyl-tRNA synthetase family. MshC subfamily. In terms of assembly, monomer. Requires Zn(2+) as cofactor.

The enzyme catalyses 1D-myo-inositol 2-amino-2-deoxy-alpha-D-glucopyranoside + L-cysteine + ATP = 1D-myo-inositol 2-(L-cysteinylamino)-2-deoxy-alpha-D-glucopyranoside + AMP + diphosphate + H(+). Catalyzes the ATP-dependent condensation of GlcN-Ins and L-cysteine to form L-Cys-GlcN-Ins. The sequence is that of L-cysteine:1D-myo-inositol 2-amino-2-deoxy-alpha-D-glucopyranoside ligase from Streptomyces scabiei (strain 87.22).